The sequence spans 22 residues: Caerin-3.5 (22 aa).

Lysine amide is present on Lys22.

Expressed by the skin dorsal glands.

The protein resides in the secreted. Its function is as follows. Shows significant activity against Gram-positive organisms, but is less effective against Gram-negative organisms. The sequence is that of Caerin-3.5 from Ranoidea gracilenta (Dainty green tree frog).